The sequence spans 946 residues: Probable outer membrane protein pmp18 (946 aa).

The signal sequence occupies residues 1 to 16 (MQNNRSLSKSSFFVGA). The Autotransporter domain maps to 668 to 946 (QGQIAPTASG…YLHAGTTFKF (279 aa)).

The protein belongs to the PMP outer membrane protein family.

It is found in the secreted. The protein localises to the cell wall. It localises to the cell outer membrane. The chain is Probable outer membrane protein pmp18 (pmp18) from Chlamydia pneumoniae (Chlamydophila pneumoniae).